Here is a 164-residue protein sequence, read N- to C-terminus: Shikimate kinase (164 aa).

Residue 11 to 16 (GSGKST) coordinates ATP. S15 contributes to the Mg(2+) binding site. The substrate site is built by D33, R57, and G79. R117 provides a ligand contact to ATP. Residue R134 participates in substrate binding.

This sequence belongs to the shikimate kinase family. In terms of assembly, monomer. Mg(2+) is required as a cofactor.

The protein localises to the cytoplasm. It catalyses the reaction shikimate + ATP = 3-phosphoshikimate + ADP + H(+). The protein operates within metabolic intermediate biosynthesis; chorismate biosynthesis; chorismate from D-erythrose 4-phosphate and phosphoenolpyruvate: step 5/7. Functionally, catalyzes the specific phosphorylation of the 3-hydroxyl group of shikimic acid using ATP as a cosubstrate. The protein is Shikimate kinase of Persephonella marina (strain DSM 14350 / EX-H1).